The sequence spans 465 residues: 3-isopropylmalate dehydratase large subunit (465 aa).

[4Fe-4S] cluster contacts are provided by cysteine 347, cysteine 407, and cysteine 410.

This sequence belongs to the aconitase/IPM isomerase family. LeuC type 1 subfamily. Heterodimer of LeuC and LeuD. The cofactor is [4Fe-4S] cluster.

It carries out the reaction (2R,3S)-3-isopropylmalate = (2S)-2-isopropylmalate. It functions in the pathway amino-acid biosynthesis; L-leucine biosynthesis; L-leucine from 3-methyl-2-oxobutanoate: step 2/4. In terms of biological role, catalyzes the isomerization between 2-isopropylmalate and 3-isopropylmalate, via the formation of 2-isopropylmaleate. The sequence is that of 3-isopropylmalate dehydratase large subunit from Aeromonas hydrophila subsp. hydrophila (strain ATCC 7966 / DSM 30187 / BCRC 13018 / CCUG 14551 / JCM 1027 / KCTC 2358 / NCIMB 9240 / NCTC 8049).